A 247-amino-acid chain; its full sequence is PF03932 family protein CutC (247 aa).

The protein belongs to the CutC family.

Its subcellular location is the cytoplasm. In Vibrio parahaemolyticus serotype O3:K6 (strain RIMD 2210633), this protein is PF03932 family protein CutC.